We begin with the raw amino-acid sequence, 399 residues long: Phosphoglycerate kinase (399 aa).

Substrate is bound by residues 22-24 (DFN), R38, 61-64 (HLGR), R120, and R153. ATP contacts are provided by residues K204, E326, and 352–355 (GGDT).

This sequence belongs to the phosphoglycerate kinase family. As to quaternary structure, monomer.

The protein resides in the cytoplasm. The enzyme catalyses (2R)-3-phosphoglycerate + ATP = (2R)-3-phospho-glyceroyl phosphate + ADP. It functions in the pathway carbohydrate degradation; glycolysis; pyruvate from D-glyceraldehyde 3-phosphate: step 2/5. This is Phosphoglycerate kinase from Geotalea uraniireducens (strain Rf4) (Geobacter uraniireducens).